Reading from the N-terminus, the 147-residue chain is Large ribosomal subunit protein uL22c (147 aa).

It belongs to the universal ribosomal protein uL22 family. Part of the 50S ribosomal subunit.

It is found in the plastid. Its function is as follows. This protein binds specifically to 23S rRNA. In terms of biological role, the globular domain of the protein is located near the polypeptide exit tunnel on the outside of the subunit, while an extended beta-hairpin is found that lines the wall of the exit tunnel in the center of the 70S ribosome. The chain is Large ribosomal subunit protein uL22c (rpl22) from Cuscuta obtusiflora (Peruvian dodder).